The following is a 271-amino-acid chain: Tryptophan synthase alpha chain (271 aa).

Catalysis depends on proton acceptor residues E49 and D60.

This sequence belongs to the TrpA family. In terms of assembly, tetramer of two alpha and two beta chains.

The catalysed reaction is (1S,2R)-1-C-(indol-3-yl)glycerol 3-phosphate + L-serine = D-glyceraldehyde 3-phosphate + L-tryptophan + H2O. It functions in the pathway amino-acid biosynthesis; L-tryptophan biosynthesis; L-tryptophan from chorismate: step 5/5. The alpha subunit is responsible for the aldol cleavage of indoleglycerol phosphate to indole and glyceraldehyde 3-phosphate. The chain is Tryptophan synthase alpha chain from Burkholderia cenocepacia (strain HI2424).